The primary structure comprises 341 residues: Heat-inducible transcription repressor HrcA (341 aa).

Belongs to the HrcA family.

Negative regulator of class I heat shock genes (grpE-dnaK-dnaJ and groELS operons). Prevents heat-shock induction of these operons. The protein is Heat-inducible transcription repressor HrcA of Mycobacteroides abscessus (strain ATCC 19977 / DSM 44196 / CCUG 20993 / CIP 104536 / JCM 13569 / NCTC 13031 / TMC 1543 / L948) (Mycobacterium abscessus).